The following is a 453-amino-acid chain: Bifunctional protein GlmU (453 aa).

Residues Met1–Lys225 are pyrophosphorylase. UDP-N-acetyl-alpha-D-glucosamine-binding positions include Leu6–Gly9, Lys20, Gln71, Gly76–Thr77, Tyr98–Asp100, Gly135, Glu150, Asn165, and Asn223. Mg(2+) is bound at residue Asp100. Residue Asn223 participates in Mg(2+) binding. Residues Ala226 to Ala246 form a linker region. Residues Gly247–Ser453 are N-acetyltransferase. UDP-N-acetyl-alpha-D-glucosamine is bound by residues Arg329 and Lys347. His359 serves as the catalytic Proton acceptor. 2 residues coordinate UDP-N-acetyl-alpha-D-glucosamine: Tyr362 and Asn373. Residues Ala376, Asn382–Tyr383, Ser401, and Ala419 each bind acetyl-CoA.

This sequence in the N-terminal section; belongs to the N-acetylglucosamine-1-phosphate uridyltransferase family. It in the C-terminal section; belongs to the transferase hexapeptide repeat family. In terms of assembly, homotrimer. Mg(2+) is required as a cofactor.

It localises to the cytoplasm. It carries out the reaction alpha-D-glucosamine 1-phosphate + acetyl-CoA = N-acetyl-alpha-D-glucosamine 1-phosphate + CoA + H(+). The catalysed reaction is N-acetyl-alpha-D-glucosamine 1-phosphate + UTP + H(+) = UDP-N-acetyl-alpha-D-glucosamine + diphosphate. The protein operates within nucleotide-sugar biosynthesis; UDP-N-acetyl-alpha-D-glucosamine biosynthesis; N-acetyl-alpha-D-glucosamine 1-phosphate from alpha-D-glucosamine 6-phosphate (route II): step 2/2. It functions in the pathway nucleotide-sugar biosynthesis; UDP-N-acetyl-alpha-D-glucosamine biosynthesis; UDP-N-acetyl-alpha-D-glucosamine from N-acetyl-alpha-D-glucosamine 1-phosphate: step 1/1. Its pathway is bacterial outer membrane biogenesis; LPS lipid A biosynthesis. Catalyzes the last two sequential reactions in the de novo biosynthetic pathway for UDP-N-acetylglucosamine (UDP-GlcNAc). The C-terminal domain catalyzes the transfer of acetyl group from acetyl coenzyme A to glucosamine-1-phosphate (GlcN-1-P) to produce N-acetylglucosamine-1-phosphate (GlcNAc-1-P), which is converted into UDP-GlcNAc by the transfer of uridine 5-monophosphate (from uridine 5-triphosphate), a reaction catalyzed by the N-terminal domain. The chain is Bifunctional protein GlmU from Burkholderia mallei (strain NCTC 10247).